The sequence spans 415 residues: G2/mitotic-specific cyclin cig1 (415 aa).

Disordered regions lie at residues 54–74 (PTLI…DTFE) and 86–118 (EERS…ILTH). The segment covering 57–71 (IEGNNESSISSSTGD) has biased composition (low complexity). Serine 96 carries the phosphoserine modification.

Belongs to the cyclin family. Cyclin G subfamily.

Its function is as follows. Required for efficient passage of the G1/S transition. The polypeptide is G2/mitotic-specific cyclin cig1 (cig1) (Schizosaccharomyces pombe (strain 972 / ATCC 24843) (Fission yeast)).